Here is a 200-residue protein sequence, read N- to C-terminus: Small ribosomal subunit protein eS1 (200 aa).

This sequence belongs to the eukaryotic ribosomal protein eS1 family. As to quaternary structure, part of the 30S ribosomal subunit.

The polypeptide is Small ribosomal subunit protein eS1 (Thermococcus kodakarensis (strain ATCC BAA-918 / JCM 12380 / KOD1) (Pyrococcus kodakaraensis (strain KOD1))).